A 461-amino-acid polypeptide reads, in one-letter code: Fumarate hydratase class II (461 aa).

Residues 98 to 100, 129 to 132, 139 to 141, and T187 each bind substrate; these read SGT, HPND, and SSN. The segment at 120 to 140 is disordered; the sequence is SKKGGKSPVHPNDHVNKGQSS. H188 serves as the catalytic Proton donor/acceptor. S318 is a catalytic residue. Residues S319 and 324–326 each bind substrate; that span reads KVN.

Belongs to the class-II fumarase/aspartase family. Fumarase subfamily. As to quaternary structure, homotetramer.

The protein resides in the cytoplasm. The enzyme catalyses (S)-malate = fumarate + H2O. It functions in the pathway carbohydrate metabolism; tricarboxylic acid cycle; (S)-malate from fumarate: step 1/1. Involved in the TCA cycle. Catalyzes the stereospecific interconversion of fumarate to L-malate. This chain is Fumarate hydratase class II, found in Rickettsia felis (strain ATCC VR-1525 / URRWXCal2) (Rickettsia azadi).